An 875-amino-acid polypeptide reads, in one-letter code: MKASEIRSTFLKFFESKGHQIVGSSPVVPGDDPTLLFTNAGMNQFKDVFLGFDKRPYSRATTSQKCIRAGGKHNDLDNVGYTARHHTFFEMLGNFSFGDYFKHDAISYAWELLTEHFKLPKDKLWVTVYSEDDEAYEIWNKVVGVPAERIVRIGDNKGARYMSDNFWMMGDTGPCGPCTEIFFDHGEGIPGGPPGSPDEDGDRYIEIWNNVFMQFNRTEDGVMHKLPKPSVDTGMGLERITAVLQHVHSNYEIDLFVALLAAAKAAVESAGGKDVDPESPSLKVIADHIRACSFTIVDGVIPGNEGRGYVLRRIARRAIRHGYKLGARTPFFHKIVAELVAQMGEAYPELRAAQARVTEVLKQEEERFFQTIQHGMEILEHALAGGTKQVDGETAFKLHDTYGFPVDLTADVCRERGVTVDQAGFDAAMEHQRSQARAAGKFKMAAGLAYSGAPTAFHGYEHLVCETSKVVAIYVDGTPVDAAQAGDDAAIVLDHTPFYAESGGQAGDSGELRNGSTRVVVADTFKIQADVFGHHGRIVEGSVKVGDSFVAKVDAELRAKTVRNHSATHLMHKALREVLGAHVQQKGSLVNAERTRFDFAHNAPVSDAQIRQVEAIVNAEILANAAASAQVMALDDAQKSGAMMLFGEKYGETVRVLSIGSSKELCGGTHVKATGDIGLFKVVAESGVAAGIRRIEAITGDNALAYLQSLESTVNGVASALKSAVPEVPARISGLQDQVRALEKELAALKGKLASSQGDSLLAQTVDINGLKVLAVVLEGADAATLRTTMDQLKNKLKTAAIVLAAVDGGKVQLAAGVTADSTAKVKAGELVNFVAQQVGGKGGGKPDMAMAGGTDPSKLAAALASVPGWVGERV.

Zn(2+)-binding residues include histidine 565, histidine 569, cysteine 666, and histidine 670.

This sequence belongs to the class-II aminoacyl-tRNA synthetase family. Zn(2+) is required as a cofactor.

It localises to the cytoplasm. It carries out the reaction tRNA(Ala) + L-alanine + ATP = L-alanyl-tRNA(Ala) + AMP + diphosphate. In terms of biological role, catalyzes the attachment of alanine to tRNA(Ala) in a two-step reaction: alanine is first activated by ATP to form Ala-AMP and then transferred to the acceptor end of tRNA(Ala). Also edits incorrectly charged Ser-tRNA(Ala) and Gly-tRNA(Ala) via its editing domain. The protein is Alanine--tRNA ligase of Leptothrix cholodnii (strain ATCC 51168 / LMG 8142 / SP-6) (Leptothrix discophora (strain SP-6)).